A 466-amino-acid chain; its full sequence is Ribulose bisphosphate carboxylase large chain (466 aa).

At K5 the chain carries N6,N6,N6-trimethyllysine. The substrate site is built by N114 and T164. The active-site Proton acceptor is K166. Substrate is bound at residue K168. Residues K192, D194, and E195 each contribute to the Mg(2+) site. An N6-carboxylysine modification is found at K192. H285 acts as the Proton acceptor in catalysis. Substrate contacts are provided by R286, H318, and S370.

This sequence belongs to the RuBisCO large chain family. Type I subfamily. In terms of assembly, heterohexadecamer of 8 large chains and 8 small chains; disulfide-linked. The disulfide link is formed within the large subunit homodimers. It depends on Mg(2+) as a cofactor. In terms of processing, the disulfide bond which can form in the large chain dimeric partners within the hexadecamer appears to be associated with oxidative stress and protein turnover.

The protein resides in the plastid. Its subcellular location is the chloroplast. The enzyme catalyses 2 (2R)-3-phosphoglycerate + 2 H(+) = D-ribulose 1,5-bisphosphate + CO2 + H2O. It carries out the reaction D-ribulose 1,5-bisphosphate + O2 = 2-phosphoglycolate + (2R)-3-phosphoglycerate + 2 H(+). In terms of biological role, ruBisCO catalyzes two reactions: the carboxylation of D-ribulose 1,5-bisphosphate, the primary event in carbon dioxide fixation, as well as the oxidative fragmentation of the pentose substrate in the photorespiration process. Both reactions occur simultaneously and in competition at the same active site. In Adenium obesum (Desert rose), this protein is Ribulose bisphosphate carboxylase large chain.